A 367-amino-acid polypeptide reads, in one-letter code: Quinolinate synthase (367 aa).

Iminosuccinate contacts are provided by histidine 46 and serine 63. [4Fe-4S] cluster is bound at residue cysteine 110. Iminosuccinate is bound by residues 141–143 and serine 162; that span reads YVN. Cysteine 229 serves as a coordination point for [4Fe-4S] cluster. Residues 255–257 and threonine 272 each bind iminosuccinate; that span reads HPE. Residue cysteine 319 participates in [4Fe-4S] cluster binding.

It belongs to the quinolinate synthase family. Type 3 subfamily. [4Fe-4S] cluster serves as cofactor.

It is found in the cytoplasm. The catalysed reaction is iminosuccinate + dihydroxyacetone phosphate = quinolinate + phosphate + 2 H2O + H(+). It functions in the pathway cofactor biosynthesis; NAD(+) biosynthesis; quinolinate from iminoaspartate: step 1/1. Its function is as follows. Catalyzes the condensation of iminoaspartate with dihydroxyacetone phosphate to form quinolinate. The protein is Quinolinate synthase of Bacillus velezensis (strain DSM 23117 / BGSC 10A6 / LMG 26770 / FZB42) (Bacillus amyloliquefaciens subsp. plantarum).